A 172-amino-acid polypeptide reads, in one-letter code: MAKFQPRIADDGRDDGLKEKMIQVNRVTKVVKGGRTMSFAALTVVGDGDGRVGMGKGKAKEVPVAVTKAMDAARRDMVKVSLKNGTVHHNVTGEHGAAKVLLAPAAPGTGIIAGGPMRAVFEVMGVTDIVAKSLGSSNPYNMVRATFNALRRSTTPSEVASKRGKSVEEIFN.

The 64-residue stretch at 17 to 80 folds into the S5 DRBM domain; it reads LKEKMIQVNR…DAARRDMVKV (64 aa).

Belongs to the universal ribosomal protein uS5 family. Part of the 30S ribosomal subunit. Contacts proteins S4 and S8.

Functionally, with S4 and S12 plays an important role in translational accuracy. Located at the back of the 30S subunit body where it stabilizes the conformation of the head with respect to the body. The chain is Small ribosomal subunit protein uS5 from Methylibium petroleiphilum (strain ATCC BAA-1232 / LMG 22953 / PM1).